We begin with the raw amino-acid sequence, 200 residues long: Holliday junction resolvase RecU (200 aa).

Residues Thr-82, Asp-84, Glu-97, and Gln-116 each coordinate Mg(2+).

This sequence belongs to the RecU family. Requires Mg(2+) as cofactor.

It is found in the cytoplasm. The catalysed reaction is Endonucleolytic cleavage at a junction such as a reciprocal single-stranded crossover between two homologous DNA duplexes (Holliday junction).. Its function is as follows. Endonuclease that resolves Holliday junction intermediates in genetic recombination. Cleaves mobile four-strand junctions by introducing symmetrical nicks in paired strands. Promotes annealing of linear ssDNA with homologous dsDNA. Required for DNA repair, homologous recombination and chromosome segregation. The protein is Holliday junction resolvase RecU of Streptococcus gordonii (strain Challis / ATCC 35105 / BCRC 15272 / CH1 / DL1 / V288).